The sequence spans 24 residues: Brevinin-1JDc (24 aa).

An intrachain disulfide couples C18 to C24.

Expressed by the skin glands.

It is found in the secreted. Its function is as follows. Has antibacterial activity against E.coli ATCC 25992 (MIC=49 uM), E.coli CIB 84492 (MIC=25 uM), S.aureus ATCC 25923 (MIC=6 uM) and S.aureus CIB 85462 (MIC=3 uM). The sequence is that of Brevinin-1JDc from Odorrana jingdongensis (Jingdong frog).